We begin with the raw amino-acid sequence, 139 residues long: Protein cornichon homolog 4 (139 aa).

Helical transmembrane passes span 5–25 (VFVF…YFII), 57–77 (LVTV…NLPV), and 118–138 (LGFH…ALIN).

The protein belongs to the cornichon family. As to quaternary structure, interacts with Sec23/24 complex components SEC24B and SEC24D. Interacts with CCR5. Interacts with ADRB2 in the early secretory pathway.

Its subcellular location is the membrane. The protein localises to the endoplasmic reticulum. The protein resides in the endoplasmic reticulum-Golgi intermediate compartment. Functionally, involved in G protein-coupled receptors (GPCRs) trafficking from the endoplasmic reticulum to the cell surface; it promotes the exit of GPCRs from the early secretory pathway, likely through interaction with the COPII machinery. The polypeptide is Protein cornichon homolog 4 (CNIH4) (Bos taurus (Bovine)).